Reading from the N-terminus, the 385-residue chain is Outer membrane protein P2 (385 aa).

A signal peptide spans 1–20 (MKKTLAALIVGAFAASAANA).

The protein belongs to the Gram-negative porin family. As to quaternary structure, homotrimer.

It localises to the cell outer membrane. In terms of biological role, forms pores that allow passive diffusion of small molecules across the outer membrane. This Haemophilus influenzae protein is Outer membrane protein P2 (ompP2).